The sequence spans 314 residues: MVSVNELGLDLFEELVENADLFNVAYHELDNGSRVVDCGVSVPGGYGAGDYFTRICMGGLGDIAFRQGMVGQFPMTFIDVNTDFPAISCLGSQKAGWTVKHDNFFAMGSGPARALSLQPKHTFEVIGYEDESDAAVICLEADRLPSGAVMEMIAEKCKVDVANVCALVAPTSSLVGSIQVAGRCVETAVYKLNELGFDTTKIIAAAGTAPIPPVRGAKLAMGVTNDATIYHGQINLTMNAPEIVDYLEKIPSCSSNGYGKPFNDIFKEAGYDFYKIDKSLFSPAEVIINEVSTGKVYQVGKVDTAVTLKSFGLA.

Belongs to the MCH family.

Its subcellular location is the cytoplasm. It catalyses the reaction 5,10-methenyl-5,6,7,8-tetrahydromethanopterin + H2O = N(5)-formyl-5,6,7,8-tetrahydromethanopterin + H(+). Its pathway is one-carbon metabolism; methanogenesis from CO(2); 5,10-methenyl-5,6,7,8-tetrahydromethanopterin from CO(2): step 3/3. Functionally, catalyzes the reversible interconversion of 5-formyl-H(4)MPT to methenyl-H(4)MPT(+). This is Methenyltetrahydromethanopterin cyclohydrolase from Methanocorpusculum labreanum (strain ATCC 43576 / DSM 4855 / Z).